We begin with the raw amino-acid sequence, 191 residues long: FMN-dependent NADH:quinone oxidoreductase 1 (191 aa).

FMN-binding positions include S10 and 16 to 18 (SVS).

The protein belongs to the azoreductase type 1 family. In terms of assembly, homodimer. Requires FMN as cofactor.

It catalyses the reaction 2 a quinone + NADH + H(+) = 2 a 1,4-benzosemiquinone + NAD(+). The enzyme catalyses N,N-dimethyl-1,4-phenylenediamine + anthranilate + 2 NAD(+) = 2-(4-dimethylaminophenyl)diazenylbenzoate + 2 NADH + 2 H(+). Its function is as follows. Quinone reductase that provides resistance to thiol-specific stress caused by electrophilic quinones. Functionally, also exhibits azoreductase activity. Catalyzes the reductive cleavage of the azo bond in aromatic azo compounds to the corresponding amines. The polypeptide is FMN-dependent NADH:quinone oxidoreductase 1 (Jannaschia sp. (strain CCS1)).